Consider the following 440-residue polypeptide: Origin recognition complex subunit 4 (440 aa).

An ATP-binding site is contributed by 64–71 (GPKGSGKS).

It belongs to the ORC4 family. ORC is composed of six subunits.

It is found in the nucleus. Functionally, component of the origin recognition complex (ORC) that binds origins of replication. DNA-binding is ATP-dependent, however specific DNA sequences that define origins of replication have not been identified so far. ORC is required to assemble the pre-replication complex necessary to initiate DNA replication. This chain is Origin recognition complex subunit 4 (orcD), found in Dictyostelium discoideum (Social amoeba).